Consider the following 129-residue polypeptide: Small ribosomal subunit protein uS11 (129 aa).

The protein belongs to the universal ribosomal protein uS11 family. In terms of assembly, part of the 30S ribosomal subunit. Interacts with proteins S7 and S18. Binds to IF-3.

Functionally, located on the platform of the 30S subunit, it bridges several disparate RNA helices of the 16S rRNA. Forms part of the Shine-Dalgarno cleft in the 70S ribosome. In Carboxydothermus hydrogenoformans (strain ATCC BAA-161 / DSM 6008 / Z-2901), this protein is Small ribosomal subunit protein uS11.